A 667-amino-acid polypeptide reads, in one-letter code: UvrABC system protein B (667 aa).

Residues 31-414 (KNFEAGAKAQ…EAEQTDIQVD (384 aa)) enclose the Helicase ATP-binding domain. 44–51 (GATGTGKT) lines the ATP pocket. The Beta-hairpin signature appears at 97–120 (YYDYYQPEAYVPSSDTYIEKDSSI). One can recognise a Helicase C-terminal domain in the interval 435-597 (QIDDLVGEIN…ITPKTIIKPI (163 aa)). Positions 630–665 (LEMVERLSEQMRLAAKKLDFEQAATLRDTILELKSE) constitute a UVR domain.

The protein belongs to the UvrB family. Forms a heterotetramer with UvrA during the search for lesions. Interacts with UvrC in an incision complex.

The protein resides in the cytoplasm. Functionally, the UvrABC repair system catalyzes the recognition and processing of DNA lesions. A damage recognition complex composed of 2 UvrA and 2 UvrB subunits scans DNA for abnormalities. Upon binding of the UvrA(2)B(2) complex to a putative damaged site, the DNA wraps around one UvrB monomer. DNA wrap is dependent on ATP binding by UvrB and probably causes local melting of the DNA helix, facilitating insertion of UvrB beta-hairpin between the DNA strands. Then UvrB probes one DNA strand for the presence of a lesion. If a lesion is found the UvrA subunits dissociate and the UvrB-DNA preincision complex is formed. This complex is subsequently bound by UvrC and the second UvrB is released. If no lesion is found, the DNA wraps around the other UvrB subunit that will check the other stand for damage. The chain is UvrABC system protein B from Latilactobacillus sakei subsp. sakei (strain 23K) (Lactobacillus sakei subsp. sakei).